Consider the following 391-residue polypeptide: tRNA (cytosine(38)-C(5))-methyltransferase (391 aa).

Residues leucine 4–aspartate 391 enclose the SAM-dependent MTase C5-type domain. S-adenosyl-L-methionine-binding positions include isoleucine 13–glycine 15, aspartate 34, isoleucine 57–glutamate 58, and serine 76. The active site involves cysteine 79. Serine 376 provides a ligand contact to S-adenosyl-L-methionine.

It belongs to the class I-like SAM-binding methyltransferase superfamily. C5-methyltransferase family.

It localises to the cytoplasm. The catalysed reaction is cytidine(38) in tRNA + S-adenosyl-L-methionine = 5-methylcytidine(38) in tRNA + S-adenosyl-L-homocysteine + H(+). Specifically methylates cytosine 38 in the anticodon loop of tRNA(Asp). Has higher activity on tRNA(Asp) modified with queuosine at position 34. The sequence is that of tRNA (cytosine(38)-C(5))-methyltransferase (TRDMT1) from Bos taurus (Bovine).